Consider the following 227-residue polypeptide: Cytochrome c oxidase subunit 2 (227 aa).

Residues 1–14 are Mitochondrial intermembrane-facing; it reads MAYPFQLGLQDATS. A helical transmembrane segment spans residues 15–45; it reads PIMEELLHFHDHTLMIVFLISSLVLYIISLM. Residues 46 to 59 lie on the Mitochondrial matrix side of the membrane; that stretch reads LTTKLTHTSTMDAQ. The chain crosses the membrane as a helical span at residues 60 to 87; the sequence is EVETVWTILPAIILILIALPSLRILYMM. Residues 88-227 lie on the Mitochondrial intermembrane side of the membrane; the sequence is DEINNPSLTV…YFEAWSALMV (140 aa). 6 residues coordinate Cu cation: histidine 161, cysteine 196, glutamate 198, cysteine 200, histidine 204, and methionine 207. Glutamate 198 serves as a coordination point for Mg(2+). The residue at position 218 (tyrosine 218) is a Phosphotyrosine.

The protein belongs to the cytochrome c oxidase subunit 2 family. In terms of assembly, component of the cytochrome c oxidase (complex IV, CIV), a multisubunit enzyme composed of 14 subunits. The complex is composed of a catalytic core of 3 subunits MT-CO1, MT-CO2 and MT-CO3, encoded in the mitochondrial DNA, and 11 supernumerary subunits COX4I, COX5A, COX5B, COX6A, COX6B, COX6C, COX7A, COX7B, COX7C, COX8 and NDUFA4, which are encoded in the nuclear genome. The complex exists as a monomer or a dimer and forms supercomplexes (SCs) in the inner mitochondrial membrane with NADH-ubiquinone oxidoreductase (complex I, CI) and ubiquinol-cytochrome c oxidoreductase (cytochrome b-c1 complex, complex III, CIII), resulting in different assemblies (supercomplex SCI(1)III(2)IV(1) and megacomplex MCI(2)III(2)IV(2)). Found in a complex with TMEM177, COA6, COX18, COX20, SCO1 and SCO2. Interacts with TMEM177 in a COX20-dependent manner. Interacts with COX20. Interacts with COX16. It depends on Cu cation as a cofactor.

The protein localises to the mitochondrion inner membrane. The catalysed reaction is 4 Fe(II)-[cytochrome c] + O2 + 8 H(+)(in) = 4 Fe(III)-[cytochrome c] + 2 H2O + 4 H(+)(out). Component of the cytochrome c oxidase, the last enzyme in the mitochondrial electron transport chain which drives oxidative phosphorylation. The respiratory chain contains 3 multisubunit complexes succinate dehydrogenase (complex II, CII), ubiquinol-cytochrome c oxidoreductase (cytochrome b-c1 complex, complex III, CIII) and cytochrome c oxidase (complex IV, CIV), that cooperate to transfer electrons derived from NADH and succinate to molecular oxygen, creating an electrochemical gradient over the inner membrane that drives transmembrane transport and the ATP synthase. Cytochrome c oxidase is the component of the respiratory chain that catalyzes the reduction of oxygen to water. Electrons originating from reduced cytochrome c in the intermembrane space (IMS) are transferred via the dinuclear copper A center (CU(A)) of subunit 2 and heme A of subunit 1 to the active site in subunit 1, a binuclear center (BNC) formed by heme A3 and copper B (CU(B)). The BNC reduces molecular oxygen to 2 water molecules using 4 electrons from cytochrome c in the IMS and 4 protons from the mitochondrial matrix. This is Cytochrome c oxidase subunit 2 (MT-CO2) from Cuon alpinus (Dhole).